A 540-amino-acid chain; its full sequence is tRNA-2-methylthio-N(6)-dimethylallyladenosine synthase (540 aa).

An MTTase N-terminal domain is found at 4–120 (RSYEVRTFGC…LPVLLERARH (117 aa)). 6 residues coordinate [4Fe-4S] cluster: Cys-13, Cys-49, Cys-83, Cys-157, Cys-161, and Cys-164. The region spanning 143–374 (RASHHSAWVS…ALQDEISWAE (232 aa)) is the Radical SAM core domain. In terms of domain architecture, TRAM spans 376–468 (RALVGRRVEV…PHHLTADGPL (93 aa)). The tract at residues 480 to 540 (WALGRDGDGG…ADACCTPVRR (61 aa)) is disordered. 2 stretches are compositionally biased toward low complexity: residues 492 to 502 (AAAQQPADGRP) and 520 to 533 (GPAS…GADA).

The protein belongs to the methylthiotransferase family. MiaB subfamily. In terms of assembly, monomer. The cofactor is [4Fe-4S] cluster.

The protein resides in the cytoplasm. The catalysed reaction is N(6)-dimethylallyladenosine(37) in tRNA + (sulfur carrier)-SH + AH2 + 2 S-adenosyl-L-methionine = 2-methylsulfanyl-N(6)-dimethylallyladenosine(37) in tRNA + (sulfur carrier)-H + 5'-deoxyadenosine + L-methionine + A + S-adenosyl-L-homocysteine + 2 H(+). In terms of biological role, catalyzes the methylthiolation of N6-(dimethylallyl)adenosine (i(6)A), leading to the formation of 2-methylthio-N6-(dimethylallyl)adenosine (ms(2)i(6)A) at position 37 in tRNAs that read codons beginning with uridine. This chain is tRNA-2-methylthio-N(6)-dimethylallyladenosine synthase, found in Frankia casuarinae (strain DSM 45818 / CECT 9043 / HFP020203 / CcI3).